Consider the following 634-residue polypeptide: GTP-binding protein 4 (634 aa).

Residue alanine 2 is modified to N-acetylalanine. At lysine 103 the chain carries N6-acetyllysine; alternate. Residue lysine 103 forms a Glycyl lysine isopeptide (Lys-Gly) (interchain with G-Cter in SUMO2); alternate linkage. Serine 122 bears the Phosphoserine mark. The OBG-type G domain occupies 169–340; it reads RTLLLCGYPN…VKTEACDRLL (172 aa). GTP contacts are provided by residues 175 to 182, 221 to 225, and 289 to 292; these read GYPNVGKS, DTPGI, and NKCD. Lysine 332 is covalently cross-linked (Glycyl lysine isopeptide (Lys-Gly) (interchain with G-Cter in SUMO2)). Phosphoserine occurs at positions 468, 470, and 472. The segment at 494 to 634 is disordered; it reads KILQSKEKNK…KRKAGKKDRR (141 aa). Lysine 534 is covalently cross-linked (Glycyl lysine isopeptide (Lys-Gly) (interchain with G-Cter in SUMO2)). The span at 544–554 shows a compositional bias: basic residues; the sequence is RRSRSVTRKRK. Serine 558 carries the phosphoserine modification. Low complexity predominate over residues 560-572; sequence PPSSTARSRSCSR. Basic and acidic residues predominate over residues 573–585; that stretch reads TPRDVSGLRDVKM. Positions 586–604 are enriched in basic residues; that stretch reads VKKAKTMMKKAQKKMNRLG. Residues 605-618 are compositionally biased toward basic and acidic residues; the sequence is KKGEADRHVFDMKP. Basic residues predominate over residues 619–634; the sequence is KHLLSGKRKAGKKDRR.

The protein belongs to the TRAFAC class OBG-HflX-like GTPase superfamily. OBG GTPase family. NOG subfamily. Associates with pre-60S ribosomal particles. Interacts with MINAS-60 (product of an alternative open reading frame of RBM10). Ubiquitous.

The protein resides in the nucleus. Its subcellular location is the nucleolus. Functionally, involved in the biogenesis of the 60S ribosomal subunit. Acts as TP53 repressor, preventing TP53 stabilization and cell cycle arrest. In Mus musculus (Mouse), this protein is GTP-binding protein 4 (Gtpbp4).